The primary structure comprises 542 residues: Homeobox and leucine zipper protein Homez (542 aa).

Positions 55–114 form a DNA-binding region, homeobox 1; it reads WTQAIQTSELDGNEHLLQAFSYFPYPSLADIALLCLRHGLQMEKVKTWFMAQRLRCGISW. Positions 165-193 are disordered; sequence LSPLAPSEQPTHMKGLKVEPEEPSQVSQL. Glycyl lysine isopeptide (Lys-Gly) (interchain with G-Cter in SUMO2) cross-links involve residues lysine 181 and lysine 201. Residues 250 to 307 are disordered; sequence VHQPDKPASVSLLDNSCKEESEPSGIPPSSSTSSPSFQALANGTTATPKPLQPLGCIS. The span at 272 to 285 shows a compositional bias: low complexity; it reads PSGIPPSSSTSSPS. The span at 286-296 shows a compositional bias: polar residues; sequence FQALANGTTAT. Position 345 is a phosphoserine (serine 345). DNA-binding regions (homeobox) lie at residues 349–409 and 443–502; these read QHQR…KHGQ and TPPL…AEVV. Residues 352-357 carry the Nuclear localization signal motif; that stretch reads RKTKRK. Disordered regions lie at residues 424-454 and 501-542; these read FQDP…PPPD and VVVC…IIWD. Threonine 443 carries the post-translational modification Phosphothreonine. A compositionally biased stretch (pro residues) spans 444–454; it reads PPLPAPPPPPD. Positions 505–542 are enriched in acidic residues; that stretch reads LDEEDEEDEEDELPEDGEEEEEEEEDDDDGDDDVIIWD.

In terms of assembly, homodimer or heterodimer (Potential). Interacts with HOXC8. As to expression, ubiquitous. Strongly expressed in testis.

The protein localises to the nucleus. In terms of biological role, may function as a transcriptional regulator. The sequence is that of Homeobox and leucine zipper protein Homez (Homez) from Mus musculus (Mouse).